The chain runs to 399 residues: Dual-specificity RNA methyltransferase RlmN (399 aa).

Glutamate 122 (proton acceptor) is an active-site residue. The region spanning 128–371 (ETDRGTLCVS…VRTPRGRDIL (244 aa)) is the Radical SAM core domain. Cysteines 135 and 374 form a disulfide. Positions 142, 146, and 149 each coordinate [4Fe-4S] cluster. Residues 200-201 (GE), serine 232, 254-256 (SLH), and asparagine 331 each bind S-adenosyl-L-methionine. The S-methylcysteine intermediate role is filled by cysteine 374.

The protein belongs to the radical SAM superfamily. RlmN family. [4Fe-4S] cluster is required as a cofactor.

It is found in the cytoplasm. The enzyme catalyses adenosine(2503) in 23S rRNA + 2 reduced [2Fe-2S]-[ferredoxin] + 2 S-adenosyl-L-methionine = 2-methyladenosine(2503) in 23S rRNA + 5'-deoxyadenosine + L-methionine + 2 oxidized [2Fe-2S]-[ferredoxin] + S-adenosyl-L-homocysteine. It catalyses the reaction adenosine(37) in tRNA + 2 reduced [2Fe-2S]-[ferredoxin] + 2 S-adenosyl-L-methionine = 2-methyladenosine(37) in tRNA + 5'-deoxyadenosine + L-methionine + 2 oxidized [2Fe-2S]-[ferredoxin] + S-adenosyl-L-homocysteine. In terms of biological role, specifically methylates position 2 of adenine 2503 in 23S rRNA and position 2 of adenine 37 in tRNAs. m2A2503 modification seems to play a crucial role in the proofreading step occurring at the peptidyl transferase center and thus would serve to optimize ribosomal fidelity. In Rhodopseudomonas palustris (strain HaA2), this protein is Dual-specificity RNA methyltransferase RlmN.